Reading from the N-terminus, the 389-residue chain is S-adenosylmethionine synthase (389 aa).

Residue H16 coordinates ATP. D18 provides a ligand contact to Mg(2+). Residue E44 coordinates K(+). Residues E57 and Q101 each contribute to the L-methionine site. The interval 101 to 111 (QSVDIAQGVNE) is flexible loop. Residues 168-170 (DAK), 234-235 (RF), D243, 249-250 (RK), A266, and K270 each bind ATP. Residue D243 coordinates L-methionine. K274 contacts L-methionine.

Belongs to the AdoMet synthase family. Homotetramer; dimer of dimers. The cofactor is Mg(2+). It depends on K(+) as a cofactor.

It is found in the cytoplasm. It catalyses the reaction L-methionine + ATP + H2O = S-adenosyl-L-methionine + phosphate + diphosphate. The protein operates within amino-acid biosynthesis; S-adenosyl-L-methionine biosynthesis; S-adenosyl-L-methionine from L-methionine: step 1/1. In terms of biological role, catalyzes the formation of S-adenosylmethionine (AdoMet) from methionine and ATP. The overall synthetic reaction is composed of two sequential steps, AdoMet formation and the subsequent tripolyphosphate hydrolysis which occurs prior to release of AdoMet from the enzyme. This is S-adenosylmethionine synthase from Magnetococcus marinus (strain ATCC BAA-1437 / JCM 17883 / MC-1).